A 52-amino-acid polypeptide reads, in one-letter code: Large ribosomal subunit protein bL33 (52 aa).

The protein belongs to the bacterial ribosomal protein bL33 family.

This chain is Large ribosomal subunit protein bL33 (rpmG), found in Chlamydia muridarum (strain MoPn / Nigg).